Consider the following 528-residue polypeptide: Bifunctional dihydrofolate reductase-thymidylate synthase (528 aa).

The tract at residues 1–20 (MASELLANPTNGSGITRPDP) is disordered. The 178-residue stretch at 23–200 (TYQVVVAATQ…IRYCFTTYVR (178 aa)) folds into the DHFR domain. Residue Val27 participates in substrate binding. NADP(+) contacts are provided by residues Ala29 and 35–41 (GIGKDGK). Asp49 serves as a coordination point for substrate. Residues 73 to 75 (RKT) and 94 to 97 (LTRS) contribute to the NADP(+) site. Positions 136, 142, and 157 each coordinate substrate. 137-144 (GGGQIYRE) provides a ligand contact to NADP(+). Positions 202-528 (RNSVAELTSQ…HQKIEMKMAV (327 aa)) are thymidylate synthase. Arg264 is a binding site for dUMP. Residue Cys409 is part of the active site. DUMP is bound by residues His410, 428 to 432 (QRSAD), Asn440, and 470 to 472 (HVY).

The protein in the N-terminal section; belongs to the dihydrofolate reductase family. It in the C-terminal section; belongs to the thymidylate synthase family.

It carries out the reaction (6S)-5,6,7,8-tetrahydrofolate + NADP(+) = 7,8-dihydrofolate + NADPH + H(+). The catalysed reaction is dUMP + (6R)-5,10-methylene-5,6,7,8-tetrahydrofolate = 7,8-dihydrofolate + dTMP. Its pathway is cofactor biosynthesis; tetrahydrofolate biosynthesis; 5,6,7,8-tetrahydrofolate from 7,8-dihydrofolate: step 1/1. In terms of biological role, bifunctional enzyme. Involved in de novo dTMP biosynthesis. Key enzyme in folate metabolism. Can play two different roles depending on the source of dihydrofolate: de novo synthesis of tetrahydrofolate or recycling of the dihydrofolate released as one of the end products of the TS catalyzed reaction. Catalyzes an essential reaction for de novo glycine and purine synthesis, DNA precursor synthesis, and for the conversion of dUMP to dTMP. This chain is Bifunctional dihydrofolate reductase-thymidylate synthase, found in Daucus carota (Wild carrot).